The chain runs to 99 residues: Large ribosomal subunit protein bL27 (99 aa).

The propeptide occupies 1–9 (MLLMNLQLF).

Belongs to the bacterial ribosomal protein bL27 family. In terms of processing, the N-terminus is cleaved by ribosomal processing cysteine protease Prp.

The polypeptide is Large ribosomal subunit protein bL27 (Clostridium novyi (strain NT)).